A 214-amino-acid chain; its full sequence is uncharacterized protein (214 aa).

Positions 1–18 (MTMYIGLILVVLATFCQG) are cleaved as a signal peptide. Asn-64 is a glycosylation site (N-linked (GlcNAc...) asparagine; by host).

This is an uncharacterized protein from Magallana gigas (Pacific oyster).